The chain runs to 236 residues: MSTPHINANPGDFAKTIIMSGDPLRAKLIAETYLEDVKEVTNVRGILGFTGKYKSKDISIMGHGMGAPSASIYFHELMATYGVKNFIRVGSCGAISDNIHLKDLIVAMGASTDSKINRIRFLDHDLAAIANYDLLQACIEVLKTTTVNYKVGNVFSSDLFYRPNENDYTLMAKYGVLGVEMEVNALYALAAEHQCRALALCTVTDHIVQHEHLTADERRTDLHEMVKVALETAIKI.

His-5 contributes to the a purine D-ribonucleoside binding site. Phosphate is bound by residues Gly-21, Arg-25, Arg-44, and 88 to 91 (RVGS). A purine D-ribonucleoside is bound by residues 180–182 (EME) and 204–205 (TD). Asp-205 acts as the Proton donor in catalysis.

Belongs to the PNP/UDP phosphorylase family. As to quaternary structure, homohexamer; trimer of homodimers.

The catalysed reaction is a purine D-ribonucleoside + phosphate = a purine nucleobase + alpha-D-ribose 1-phosphate. It catalyses the reaction a purine 2'-deoxy-D-ribonucleoside + phosphate = a purine nucleobase + 2-deoxy-alpha-D-ribose 1-phosphate. Catalyzes the reversible phosphorolytic breakdown of the N-glycosidic bond in the beta-(deoxy)ribonucleoside molecules, with the formation of the corresponding free purine bases and pentose-1-phosphate. This chain is Purine nucleoside phosphorylase DeoD-type 1, found in Shewanella oneidensis (strain ATCC 700550 / JCM 31522 / CIP 106686 / LMG 19005 / NCIMB 14063 / MR-1).